The primary structure comprises 339 residues: NADH-quinone oxidoreductase subunit H (339 aa).

9 helical membrane-spanning segments follow: residues 10-30, 50-70, 82-102, 115-135, 161-181, 187-207, 235-255, 275-295, and 310-330; these read FPLIIIALKVVAITVPLILCV, PNVVGPFGLLQPIADAVKLLF, ILFILAPMITFILSLIGWAVV, VGVLYILAISSLSVYGIIIAG, MGLVIITVLLTTGTLNLSGII, IPWWIDLMLLPMGVVFFISVL, MGFALFFLGEYANMILVSAMT, IPGFFWFAFKVGFLLFCFLWI, and LGWKVLLPLTLFWVVLVSSVL.

The protein belongs to the complex I subunit 1 family. In terms of assembly, NDH-1 is composed of 14 different subunits. Subunits NuoA, H, J, K, L, M, N constitute the membrane sector of the complex.

It localises to the cell inner membrane. The catalysed reaction is a quinone + NADH + 5 H(+)(in) = a quinol + NAD(+) + 4 H(+)(out). Functionally, NDH-1 shuttles electrons from NADH, via FMN and iron-sulfur (Fe-S) centers, to quinones in the respiratory chain. The immediate electron acceptor for the enzyme in this species is believed to be ubiquinone. Couples the redox reaction to proton translocation (for every two electrons transferred, four hydrogen ions are translocated across the cytoplasmic membrane), and thus conserves the redox energy in a proton gradient. This subunit may bind ubiquinone. The sequence is that of NADH-quinone oxidoreductase subunit H from Rickettsia canadensis (strain McKiel).